The following is a 128-amino-acid chain: Large ribosomal subunit protein bL12 (128 aa).

It belongs to the bacterial ribosomal protein bL12 family. Homodimer. Part of the ribosomal stalk of the 50S ribosomal subunit. Forms a multimeric L10(L12)X complex, where L10 forms an elongated spine to which 2 to 4 L12 dimers bind in a sequential fashion. Binds GTP-bound translation factors.

Functionally, forms part of the ribosomal stalk which helps the ribosome interact with GTP-bound translation factors. Is thus essential for accurate translation. This is Large ribosomal subunit protein bL12 from Corynebacterium jeikeium (strain K411).